The sequence spans 130 residues: Small ribosomal subunit protein uS8 (130 aa).

The protein belongs to the universal ribosomal protein uS8 family. In terms of assembly, part of the 30S ribosomal subunit. Contacts proteins S5 and S12.

In terms of biological role, one of the primary rRNA binding proteins, it binds directly to 16S rRNA central domain where it helps coordinate assembly of the platform of the 30S subunit. The chain is Small ribosomal subunit protein uS8 from Aeromonas hydrophila subsp. hydrophila (strain ATCC 7966 / DSM 30187 / BCRC 13018 / CCUG 14551 / JCM 1027 / KCTC 2358 / NCIMB 9240 / NCTC 8049).